We begin with the raw amino-acid sequence, 270 residues long: Diaminopimelate epimerase (270 aa).

Residues N15, Q49, and N66 each contribute to the substrate site. Residue C75 is the Proton donor of the active site. Substrate-binding positions include 76–77 (GN), N155, N187, and 204–205 (ER). The active-site Proton acceptor is the C213. A substrate-binding site is contributed by 214-215 (GS).

Belongs to the diaminopimelate epimerase family. Homodimer.

It localises to the cytoplasm. It carries out the reaction (2S,6S)-2,6-diaminopimelate = meso-2,6-diaminopimelate. Its pathway is amino-acid biosynthesis; L-lysine biosynthesis via DAP pathway; DL-2,6-diaminopimelate from LL-2,6-diaminopimelate: step 1/1. Its function is as follows. Catalyzes the stereoinversion of LL-2,6-diaminopimelate (L,L-DAP) to meso-diaminopimelate (meso-DAP), a precursor of L-lysine and an essential component of the bacterial peptidoglycan. The sequence is that of Diaminopimelate epimerase from Rickettsia typhi (strain ATCC VR-144 / Wilmington).